Consider the following 453-residue polypeptide: Ribosomal protein uS12 methylthiotransferase RimO (453 aa).

An MTTase N-terminal domain is found at 6–116 (PKVGFVSLGC…VMEAVHEALP (111 aa)). Residues cysteine 15, cysteine 51, cysteine 80, cysteine 147, cysteine 151, and cysteine 154 each coordinate [4Fe-4S] cluster. The region spanning 133 to 370 (LTPRHYAYLK…MEKQAQISAA (238 aa)) is the Radical SAM core domain. The TRAM domain occupies 373-441 (EAKIGTVQQC…EHDLYGDALP (69 aa)).

It belongs to the methylthiotransferase family. RimO subfamily. Requires [4Fe-4S] cluster as cofactor.

Its subcellular location is the cytoplasm. The enzyme catalyses L-aspartate(89)-[ribosomal protein uS12]-hydrogen + (sulfur carrier)-SH + AH2 + 2 S-adenosyl-L-methionine = 3-methylsulfanyl-L-aspartate(89)-[ribosomal protein uS12]-hydrogen + (sulfur carrier)-H + 5'-deoxyadenosine + L-methionine + A + S-adenosyl-L-homocysteine + 2 H(+). Its function is as follows. Catalyzes the methylthiolation of an aspartic acid residue of ribosomal protein uS12. The protein is Ribosomal protein uS12 methylthiotransferase RimO of Stenotrophomonas maltophilia (strain K279a).